We begin with the raw amino-acid sequence, 141 residues long: U-scoloptoxin(17)-Er3a (141 aa).

A signal peptide spans 1-21 (MKSTFALVFGILMVIAHLSFA).

It belongs to the scoloptoxin-17 family. In terms of processing, contains 3 disulfide bonds. In terms of tissue distribution, expressed by the venom gland.

The protein localises to the secreted. This is U-scoloptoxin(17)-Er3a from Ethmostigmus rubripes (Giant centipede).